Here is a 459-residue protein sequence, read N- to C-terminus: MRRRLSSVLINNQCIASQRHYHTSRPEKPTKKASSHEPTHKFTRKPWEEVPFLTDLKEIEDPEEALSLFHQYQEMGFRHDYPSYSSLIYKLAKSRNFDAVDQILRLVRYRNVRCRESLFMGLIQHYGKAGSVDKAIDVFHKITSFDCVRTIQSLNTLINVLVDNGELEKAKSFFDGAKDMRLRPNSVSFNILIKGFLDKCDWEAACKVFDEMLEMEVQPSVVTYNSLIGFLCRNDDMGKAKSLLEDMIKKRIRPNAVTFGLLMKGLCCKGEYNEAKKLMFDMEYRGCKPGLVNYGILMSDLGKRGRIDEAKLLLGEMKKRRIKPDVVIYNILVNHLCTECRVPEAYRVLTEMQMKGCKPNAATYRMMIDGFCRIEDFDSGLNVLNAMLASRHCPTPATFVCMVAGLIKGGNLDHACFVLEVMGKKNLSFGSGAWQNLLSDLCIKDGGVYCEALSEVISI.

The N-terminal 20 residues, 1–20 (MRRRLSSVLINNQCIASQRH), are a transit peptide targeting the mitochondrion. The interval 19–41 (RHYHTSRPEKPTKKASSHEPTHK) is disordered. Residues 24–41 (SRPEKPTKKASSHEPTHK) show a composition bias toward basic and acidic residues. 10 PPR repeats span residues 80-114 (DYPS…NVRC), 115-149 (RESL…DCVR), 150-184 (TIQS…RLRP), 185-219 (NSVS…EVQP), 220-254 (SVVT…RIRP), 255-289 (NAVT…GCKP), 290-324 (GLVN…RIKP), 325-359 (DVVI…GCKP), 360-394 (NAAT…RHCP), and 395-429 (TPAT…NLSF).

Belongs to the PPR family. P subfamily.

The protein resides in the mitochondrion. In Arabidopsis thaliana (Mouse-ear cress), this protein is Pentatricopeptide repeat-containing protein At1g07740, mitochondrial.